The sequence spans 420 residues: RING finger protein 39 (420 aa).

The RING-type zinc finger occupies 88–135; it reads CPLCGGSFEDPVLLACEHSFCRACLARRWGTPPATDTEASPTACPCCG. Disordered regions lie at residues 166 to 186 and 246 to 265; these read PGAR…CLDP and DRRS…DGPK. Positions 210-420 constitute a B30.2/SPRY domain; the sequence is DDLPEDYPVV…APLRIVPAES (211 aa).

The protein resides in the cytoplasm. It catalyses the reaction S-ubiquitinyl-[E2 ubiquitin-conjugating enzyme]-L-cysteine + [acceptor protein]-L-lysine = [E2 ubiquitin-conjugating enzyme]-L-cysteine + N(6)-ubiquitinyl-[acceptor protein]-L-lysine.. The protein operates within protein modification; protein ubiquitination. In terms of biological role, plays an inhibitory role in anti-RNA viral innate immunity by targeting the adapter DDX3X and promoting its 'Lys-48'-linked polyubiquitination. Alternatively, enhances the cGAS-STING pathway activation by promoting 'Lys-63'-linked ubiquitination of STING1, facilitating the STING1-TBK1 complex formation and STING1 activation. The sequence is that of RING finger protein 39 (RNF39) from Macaca mulatta (Rhesus macaque).